Consider the following 280-residue polypeptide: MDIILLIQAVIMGIVEGITEFLPISSTGYLILSADLMGFWTKEKVDLFVVVVQFGAILAVIYDYWGRLWQALMGLLTGKAEGMSNPRQLGLSLIVATIPVMIVGFTFADEIKAYLFNPIVVAIMLIIGGLLIFYVENRPKAIIAEEAEDVSLKTALMIGLLQCLALIPGTSRSGATIIGALWLGVSRKASAEFSFFLGIPVIIGAALLDFIKHRDVLTSSEDWLVLGIGTVVSFIIALLCIRLLVAWVSRRDFKIFAWLRIITGVLVLIAAWGFGYQMAG.

8 helical membrane passes run 3–23, 45–65, 88–108, 115–135, 150–170, 191–211, 225–245, and 255–275; these read IILLIQAVIMGIVEGITEFLP, VDLFVVVVQFGAILAVIYDYW, QLGLSLIVATIPVMIVGFTFA, LFNPIVVAIMLIIGGLLIFYV, VSLKTALMIGLLQCLALIPGT, AEFSFFLGIPVIIGAALLDFI, VLGIGTVVSFIIALLCIRLLV, and IFAWLRIITGVLVLIAAWGFG.

The protein belongs to the UppP family.

The protein localises to the cell inner membrane. It catalyses the reaction di-trans,octa-cis-undecaprenyl diphosphate + H2O = di-trans,octa-cis-undecaprenyl phosphate + phosphate + H(+). Functionally, catalyzes the dephosphorylation of undecaprenyl diphosphate (UPP). Confers resistance to bacitracin. The chain is Undecaprenyl-diphosphatase from Psychrobacter cryohalolentis (strain ATCC BAA-1226 / DSM 17306 / VKM B-2378 / K5).